A 355-amino-acid chain; its full sequence is UDP-N-acetylglucosamine--N-acetylmuramyl-(pentapeptide) pyrophosphoryl-undecaprenol N-acetylglucosamine transferase (355 aa).

UDP-N-acetyl-alpha-D-glucosamine-binding positions include 12-14 (TGG), Asn124, Arg163, Ser191, Ile243, 262-267 (ALTVAE), and Gln288.

The protein belongs to the glycosyltransferase 28 family. MurG subfamily.

Its subcellular location is the cell inner membrane. The enzyme catalyses di-trans,octa-cis-undecaprenyl diphospho-N-acetyl-alpha-D-muramoyl-L-alanyl-D-glutamyl-meso-2,6-diaminopimeloyl-D-alanyl-D-alanine + UDP-N-acetyl-alpha-D-glucosamine = di-trans,octa-cis-undecaprenyl diphospho-[N-acetyl-alpha-D-glucosaminyl-(1-&gt;4)]-N-acetyl-alpha-D-muramoyl-L-alanyl-D-glutamyl-meso-2,6-diaminopimeloyl-D-alanyl-D-alanine + UDP + H(+). Its pathway is cell wall biogenesis; peptidoglycan biosynthesis. Functionally, cell wall formation. Catalyzes the transfer of a GlcNAc subunit on undecaprenyl-pyrophosphoryl-MurNAc-pentapeptide (lipid intermediate I) to form undecaprenyl-pyrophosphoryl-MurNAc-(pentapeptide)GlcNAc (lipid intermediate II). This Tolumonas auensis (strain DSM 9187 / NBRC 110442 / TA 4) protein is UDP-N-acetylglucosamine--N-acetylmuramyl-(pentapeptide) pyrophosphoryl-undecaprenol N-acetylglucosamine transferase.